The chain runs to 222 residues: Deoxyribose-phosphate aldolase (222 aa).

Catalysis depends on D92, which acts as the Proton donor/acceptor. K156 functions as the Schiff-base intermediate with acetaldehyde in the catalytic mechanism. The active-site Proton donor/acceptor is K185.

It belongs to the DeoC/FbaB aldolase family. DeoC type 1 subfamily. In terms of assembly, homodimer.

The protein localises to the cytoplasm. It catalyses the reaction 2-deoxy-D-ribose 5-phosphate = D-glyceraldehyde 3-phosphate + acetaldehyde. It participates in carbohydrate degradation; 2-deoxy-D-ribose 1-phosphate degradation; D-glyceraldehyde 3-phosphate and acetaldehyde from 2-deoxy-alpha-D-ribose 1-phosphate: step 2/2. With respect to regulation, shows high stability to high concentrations of acetaldehyde. In terms of biological role, catalyzes a reversible aldol reaction between acetaldehyde and D-glyceraldehyde 3-phosphate to generate 2-deoxy-D-ribose 5-phosphate. The sequence is that of Deoxyribose-phosphate aldolase from Aciduliprofundum boonei (strain DSM 19572 / T469).